A 250-amino-acid chain; its full sequence is Ubiquinone/menaquinone biosynthesis C-methyltransferase UbiE (250 aa).

S-adenosyl-L-methionine-binding positions include threonine 74, aspartate 94, 122–123 (DA), and serine 139.

It belongs to the class I-like SAM-binding methyltransferase superfamily. MenG/UbiE family.

The catalysed reaction is a 2-demethylmenaquinol + S-adenosyl-L-methionine = a menaquinol + S-adenosyl-L-homocysteine + H(+). It catalyses the reaction a 2-methoxy-6-(all-trans-polyprenyl)benzene-1,4-diol + S-adenosyl-L-methionine = a 5-methoxy-2-methyl-3-(all-trans-polyprenyl)benzene-1,4-diol + S-adenosyl-L-homocysteine + H(+). Its pathway is quinol/quinone metabolism; menaquinone biosynthesis; menaquinol from 1,4-dihydroxy-2-naphthoate: step 2/2. The protein operates within cofactor biosynthesis; ubiquinone biosynthesis. Functionally, methyltransferase required for the conversion of demethylmenaquinol (DMKH2) to menaquinol (MKH2) and the conversion of 2-polyprenyl-6-methoxy-1,4-benzoquinol (DDMQH2) to 2-polyprenyl-3-methyl-6-methoxy-1,4-benzoquinol (DMQH2). The chain is Ubiquinone/menaquinone biosynthesis C-methyltransferase UbiE from Dinoroseobacter shibae (strain DSM 16493 / NCIMB 14021 / DFL 12).